The sequence spans 352 residues: Chorismate synthase (352 aa).

NADP(+) is bound at residue Arg48. FMN-binding positions include 125-127 (RSS), 238-239 (NA), Gly278, 293-297 (KPTSS), and Arg319.

The protein belongs to the chorismate synthase family. As to quaternary structure, homotetramer. FMNH2 is required as a cofactor.

It catalyses the reaction 5-O-(1-carboxyvinyl)-3-phosphoshikimate = chorismate + phosphate. It functions in the pathway metabolic intermediate biosynthesis; chorismate biosynthesis; chorismate from D-erythrose 4-phosphate and phosphoenolpyruvate: step 7/7. Catalyzes the anti-1,4-elimination of the C-3 phosphate and the C-6 proR hydrogen from 5-enolpyruvylshikimate-3-phosphate (EPSP) to yield chorismate, which is the branch point compound that serves as the starting substrate for the three terminal pathways of aromatic amino acid biosynthesis. This reaction introduces a second double bond into the aromatic ring system. The protein is Chorismate synthase of Legionella pneumophila (strain Paris).